The sequence spans 629 residues: Embryonic polyadenylate-binding protein A (629 aa).

4 RRM domains span residues 11–89 (ASLY…WSQR), 99–175 (GNVF…HFKS), 191–268 (TNVY…RAQK), and 294–370 (VNLY…LAQR). The 78-residue stretch at 539–616 (QEPLTASLLA…AVAVLQAHQA (78 aa)) folds into the PABC domain.

This sequence belongs to the polyadenylate-binding protein type-1 family. As to quaternary structure, interacts with dazl in an RNA-independent manner. The C-terminus can self-associate and also interact with the C-terminus of pabpc1, independently of RNA. RRM 1 and RRM 2 interact with both eif4g1 and paip1, and the C-terminus also interacts with paip1. Prior to oocyte maturation, found in a complex with dazl and pum2 proteins and spdy1 mRNA; pum2 dissociates from the complex during maturation. Interacts with the translation termination factor sup35/erf3. In terms of tissue distribution, expressed in adult testis, but at a reduced level compared to oocytes.

It is found in the cytoplasm. Functionally, binds and protects the poly(A) tail of mRNA with or without an AU-rich element (ARE) and prevents mRNA deadenylation. Stimulates the translation of mRNAs to which it is bound during early development. In Xenopus laevis (African clawed frog), this protein is Embryonic polyadenylate-binding protein A (epabp-a).